The sequence spans 228 residues: uncharacterized protein (228 aa).

Its subcellular location is the mitochondrion. This is an uncharacterized protein from Emericella nidulans (Aspergillus nidulans).